A 615-amino-acid chain; its full sequence is Sodium-dependent neutral amino acid transporter B(0)AT3 (615 aa).

The Cytoplasmic segment spans residues 1 to 26 (MAQASGMDPLVDIEDERPKWDNKLQY). Residues 27–47 (LLSCIGFAVGLGNIWRFPYLC) form a helical membrane-spanning segment. The Extracellular segment spans residues 48–52 (HTHGG). Residues 53 to 73 (GAFLIPYFIALVFEGIPLFYI) traverse the membrane as a helical segment. Residues 74–105 (ELAIGQRLRRGSIGVWKTISPYLGGVGLGCFS) are Cytoplasmic-facing. A helical membrane pass occupies residues 106–126 (VSFLVSLYYNTILLWVLWFFL). Residues 127–177 (NSFQHPLPWSTCPLDLNRTGFVQECQSSGTVSYFWYRQTLNITSDISNTGT) are Extracellular-facing. Residues Asn143 and Asn167 are each glycosylated (N-linked (GlcNAc...) asparagine). The helical transmembrane segment at 178-198 (IQWKLFLCLVACWTTVYLCVI) threads the bilayer. At 199–206 (RGIESTGK) the chain is on the cytoplasmic side. A helical membrane pass occupies residues 207-227 (VIYFTALFPYLVLTIFLIRGL). The Extracellular segment spans residues 228–255 (TLPGATEGLTYLFTPNMKILQNSRVWLD). The chain crosses the membrane as a helical span at residues 256–276 (AATQIFFSLSLAFGGHIAFAS). At 277–290 (YNQPRNNCEKDAVT) the chain is on the cytoplasmic side. Residues 291–311 (IALVNSMTSLYASITIFSIMG) traverse the membrane as a helical segment. Residues 312–397 (FKASNDYGRC…FTEAVLHMPG (86 aa)) lie on the Extracellular side of the membrane. An N-linked (GlcNAc...) asparagine glycan is attached at Asn353. Residues 398–418 (ASVWSVLFFGMLFTLGLSSMF) traverse the membrane as a helical segment. Topologically, residues 419 to 442 (GNMEGVITPLFDMGILPKGVPKET) are cytoplasmic. Residues 443–463 (MTGVVCFICFLSAICFTLQSG) traverse the membrane as a helical segment. The Extracellular segment spans residues 464–472 (SYWLEIFDS). The chain crosses the membrane as a helical span at residues 473 to 493 (FAASLNLIIFAFMEVVGVIHV). At 494–520 (YGIKRFCDDIEWMTGRRPSLYWQVTWR) the chain is on the cytoplasmic side. Residues 521–541 (VVSPMLLFGIFLSYIVLLAQS) traverse the membrane as a helical segment. The Extracellular portion of the chain corresponds to 542 to 571 (SPSYKAWNPQYEHFPSREEKLYPGWVQVTC). Residues 572-592 (VLLSFLPSLWVPGIALAQLLF) traverse the membrane as a helical segment. Residues 593 to 615 (QYRQRWKNTHLESALKPQESRGC) are Cytoplasmic-facing.

It belongs to the sodium:neurotransmitter symporter (SNF) (TC 2.A.22) family. SLC6A18 subfamily. Interacts with CLTRN; this interaction regulates the trafficking of SLC6A18 to the cell membrane and its activity. Kidney-specific expression.

The protein localises to the apical cell membrane. It localises to the cell membrane. The enzyme catalyses L-alanine(out) + chloride(out) + 2 Na(+)(out) = L-alanine(in) + chloride(in) + 2 Na(+)(in). The catalysed reaction is glycine(out) + chloride(out) + 2 Na(+)(out) = glycine(in) + chloride(in) + 2 Na(+)(in). It carries out the reaction L-methionine(out) + chloride(out) + 2 Na(+)(out) = L-methionine(in) + chloride(in) + 2 Na(+)(in). It catalyses the reaction L-valine(out) + chloride(out) + 2 Na(+)(out) = L-valine(in) + chloride(in) + 2 Na(+)(in). The enzyme catalyses L-isoleucine(out) + chloride(out) + 2 Na(+)(out) = L-isoleucine(in) + chloride(in) + 2 Na(+)(in). The catalysed reaction is L-serine(out) + chloride(out) + 2 Na(+)(out) = L-serine(in) + chloride(in) + 2 Na(+)(in). It carries out the reaction L-leucine(out) + chloride(out) + 2 Na(+)(out) = L-leucine(in) + chloride(in) + 2 Na(+)(in). In terms of biological role, symporter that transports one amino acid molecule together with two sodium and one chloride ions in kidneys and plays a role in the neutral amino acids reabsorption. Preferentially transports neutral amino acids such as L-glycine and L-alanine but also other neutral amino acids. Required CLTRN for cell surface expression and for its amino acid transporter activity. The transport mechanism is pH-independent. This Rattus norvegicus (Rat) protein is Sodium-dependent neutral amino acid transporter B(0)AT3.